The primary structure comprises 508 residues: Amphoterin-induced protein 3 (508 aa).

A signal peptide spans 1 to 19 (MAWLVLLGLLLCMLGAGSG). The Extracellular segment spans residues 20 to 383 (TSDLEGVLPP…PRPEPEAFNT (364 aa)). One can recognise an LRRNT domain in the interval 25–61 (GVLPPDPHNCPNKCVCAADVLSCAGRGLQDLPAALPA). 2 disulfide bridges follow: Cys-34-Cys-40 and Cys-38-Cys-47. LRR repeat units follow at residues 62–83 (TAAELDLSHNALKRLHPGWLAP), 86–107 (RLRALYLGYNKLDVLGRGVFTN), 110–131 (GLRILDLSSNLLRRLRTYDLDG), 134–155 (ELEKLLLFNNRLMHLDLDAFQG), 158–178 (MLSHLYLSCNELSSFSFNHLH), and 184–207 (RLRTLDLSSNWLGHVSVPELAALP). An N-linked (GlcNAc...) asparagine glycan is attached at Asn-107. The region spanning 219–275 (NPLPCDCSLYHLLRRWHQRGLSALHDFEREYTCLAFKVAESRVRFFEHSRVFKNCSV) is the LRRCT domain. 3 disulfide bridges follow: Cys-223–Cys-251, Cys-225–Cys-273, and Cys-300–Cys-352. N-linked (GlcNAc...) asparagine glycosylation is found at Asn-272, Asn-301, Asn-362, and Asn-368. Positions 279–370 (PGLELPEEEL…HNQTLEYNVS (92 aa)) constitute an Ig-like C2-type domain. Residues 384–404 (GFTTLLGCIVGLVLVLLYLFA) traverse the membrane as a helical segment. Residues 405-508 (PPCRGCCRCC…STGSEGLMMS (104 aa)) are Cytoplasmic-facing.

The protein belongs to the immunoglobulin superfamily. AMIGO family. Binds AMIGO1 or AMIGO2.

It is found in the membrane. May mediate heterophilic cell-cell interaction. May contribute to signal transduction through its intracellular domain. This Rattus norvegicus (Rat) protein is Amphoterin-induced protein 3.